Reading from the N-terminus, the 861-residue chain is DNA mismatch repair protein MutS (861 aa).

616-623 (GPNMGGKS) serves as a coordination point for ATP.

The protein belongs to the DNA mismatch repair MutS family.

Functionally, this protein is involved in the repair of mismatches in DNA. It is possible that it carries out the mismatch recognition step. This protein has a weak ATPase activity. The polypeptide is DNA mismatch repair protein MutS (Haemophilus influenzae (strain PittEE)).